Consider the following 498-residue polypeptide: ADP,ATP carrier protein 1 (498 aa).

At 1–33 (MNNPKNDNYLSELSKVIWPIERYENKKFLPMAF) the chain is on the cytoplasmic side. A helical transmembrane segment spans residues 34-54 (MMFCILLNYSTLRSIKDGFVV). An intrachain disulfide couples Cys-37 to Cys-85. At 55 to 67 (TDIGAEAISFLKT) the chain is on the extracellular side. A helical membrane pass occupies residues 68-88 (YIVLPSAVIAMVIYVKLCDIL). Topologically, residues 89–92 (KQEN) are cytoplasmic. The chain crosses the membrane as a helical span at residues 93–113 (VFYVITSFFLGYFALFAFVLY). At 114 to 147 (PYPDLVHPDPETIESWSVAYPNVKWFIRIVGKWS) the chain is on the extracellular side. Residues 148 to 168 (FASFYTMAELWGTMMLSLLFW) form a helical membrane-spanning segment. At 169-184 (QFANQITKTDEAKRFY) the chain is on the cytoplasmic side. Residues 185-205 (SMFGLLANLALPVTSVIIGYC) traverse the membrane as a helical segment. The Extracellular segment spans residues 206-218 (LHEKTQIVAEHLK). Residues 219–239 (FVPLFVIMITSSFLVILTYRW) form a helical membrane-spanning segment. Topologically, residues 240–279 (MNKNVLTDPRLYDPALVKEKKAKAKMSLIDSFKMIFTSKY) are cytoplasmic. Residues 280 to 300 (VGYIALLLIAYGVSVNLVEGV) form a helical membrane-spanning segment. Over 301 to 320 (WKSKVKELYPTKEAYTIYMG) the chain is Extracellular. The chain crosses the membrane as a helical span at residues 321–341 (KFQFYQGWVAIAFMLIGSNIL). The Cytoplasmic portion of the chain corresponds to 342–348 (RKVSWLT). The chain crosses the membrane as a helical span at residues 349–369 (AAMITPLMMLITGAAFFAFIF). At 370–379 (FDSVIAMHLT) the chain is on the extracellular side. The helical transmembrane segment at 380–400 (GILASGPLALAVMIGMIQNVL) threads the bilayer. The Cytoplasmic segment spans residues 401-438 (SKGVKYSLFDATKNMAYIPLDKDLRVKGQAAVEVIGGR). 436-442 (GGRFGKS) provides a ligand contact to ATP. Residues 439 to 459 (FGKSGGAIIQSTFFILFPAFG) form a helical membrane-spanning segment. At 460–465 (FVEATP) the chain is on the extracellular side. Residues 466–486 (YFASIFFVIVILWIYAVKGLN) form a helical membrane-spanning segment. Over 487 to 498 (KEYKVLVNKTEK) the chain is Cytoplasmic.

The protein belongs to the ADP/ATP translocase tlc family.

The protein resides in the cell membrane. In terms of biological role, provides the rickettsial cell with host ATP in exchange for rickettsial ADP. This is an obligate exchange system. This energy acquiring activity is an important component of rickettsial parasitism. This Rickettsia conorii (strain ATCC VR-613 / Malish 7) protein is ADP,ATP carrier protein 1 (tlcA).